A 232-amino-acid chain; its full sequence is MVEIEIEPHEEFEGVYWAIFEDGRKKPATENLVPGHQVYGERLVEYDGKEYRVWEPRRSKLAAMIMNGMEYFPFEEGSKVLYLGAAAGTTPSHVSDIIKESGVEYCVEFASRMMQELIPVCEKRPNMIPILGDATKPHGYAPLVEQVDVIYQDIAQPKQAEVVADNAEAFLRPGGYVIVAIKARSIDVTKEPEEVFEDEERKLEERGFEVLEVIDLEPYERDHVGIVAEYHG.

S-adenosyl-L-methionine-binding positions include 89–90 (TT), 108–109 (EF), 133–134 (DA), and 153–156 (DIAQ).

Belongs to the methyltransferase superfamily. Fibrillarin family. In terms of assembly, interacts with nop5. Component of box C/D small ribonucleoprotein (sRNP) particles that contain rpl7ae, FlpA and nop5, plus a guide RNA.

Involved in pre-rRNA and tRNA processing. Utilizes the methyl donor S-adenosyl-L-methionine to catalyze the site-specific 2'-hydroxyl methylation of ribose moieties in rRNA and tRNA. Site specificity is provided by a guide RNA that base pairs with the substrate. Methylation occurs at a characteristic distance from the sequence involved in base pairing with the guide RNA. The sequence is that of Fibrillarin-like rRNA/tRNA 2'-O-methyltransferase from Methanopyrus kandleri (strain AV19 / DSM 6324 / JCM 9639 / NBRC 100938).